Here is a 1375-residue protein sequence, read N- to C-terminus: MKASEMARPPMRPGNPHAFASPATTPSRTASPNNAQGANVRTTQGGNQAGASEQQQPLDCFVVYELFASAVTALVSFFLVKDCGAVALNYRTFVSKVEPQQEEGKIVTDLDRLYWLTSVHVHWFSSGTLLVSTSTERTLALQCLGDLSEDEQQKLVDRCIRVAPNAMLASISSFDDPRQLSADDSNRRTSKKKAKMDSLEQNIEKWRMSVQRWLSRRGYSLPNLDKNSAWVTIRVGQLAQFPAMSPHLPTSARDVLWPRSLCFMQSLVPDDLKWFEVPGSAGFRDPIDAAQDWFTGQLERDKILDMQRKAKKAEEDAMRRKDEAPGLYPSSPFTARTGVYGDLQPVSGVYPTPPDGIVPGTGISSTDTPSVSGTASNVVLVPGGNTPAINLSAPQDYTTTDNQQHASTSPTFPAPLEPFQTSGEDDDLFEDMEGDGFGGPDVEEADFDFFDGPDGDDVNMADAPALPETTNKPHKQLNNDVAMAHEEEHSVKEEMSDPLAALESALAAPYRPINDGMPEEKVSEKEAKAVVPVEALATSPAQIKQNPPAKKEATPPLSPSAIAKTLQPSPPKKQSSFPASLQRTNSAFHSLDFSRRLSLVDAKYQDGRFAARIEKTEDDESAVNPGRLKSLKDLPLLNKLRYAVASASTAKSTEALSLARAVSDDSASDSESETSDMSEGSPEDPVDTHPLPYLGRLIIPAKRKLPTEGHGTPLSVTSFAESLAGDWQDSNSLLLDESSLTFFEPNTWDWSIPDLSMEPPEEKPLNGKESIAVTQILTDQIVSATLDLLDENALVESTSSIEPSSETRWQICIKELFPKAAECTLSALIAIHDVFPDLSAQAKGQQRPPPRKPNESNAIPSNHMYPMNPPFIRVRRAETHWDLLPPSIAFWEPLGLAPASPPKNVVAFCIYPHSASLRPILDRFMLNLQLAYDTCKLGSHARVETVIEYEGGLVPVKANSQTSAKEAFRALKDTCIQLGKLLAIQYAQLGEQQDTKIDAFVVYMVDPFGNPAALWELCSAFWSLFQAYGQGPPGRSDPTPKPDLVLQIIPIKYLASFDVPVILDAATYVSLAREVYDRCPPSVASTDKTPLSIYKAPAFQLEESLPRNVQFKLLSEPPQDLLRENSYMHIAYAISLDGNWLTAAWSDSCGKSQAVVSYHLGTRVFGDIAKEIWQTTIEILQARRVQWRVCIAKSGPLDREELETWVLLITCPTQVNLFLTILTVIEDPPYKFTPTTPAPSNSSAQANTNTPGSTPQTGVSPDPTIGLTPAATPSADPAPDPAADPEARLIDVTDETWGIILAHRLHNSNSTNQFSPALISGLLVKRGITHATSNSIHHPIPDPLPGPITVAVNILWIGAVGSTWKRAAESRGTQY.

Residues 1–51 (MKASEMARPPMRPGNPHAFASPATTPSRTASPNNAQGANVRTTQGGNQAGA) form a disordered region. Over residues 22-51 (PATTPSRTASPNNAQGANVRTTQGGNQAGA) the composition is skewed to polar residues. Coiled coils occupy residues 182–216 (ADDS…WLSR) and 297–324 (QLER…KDEA). Over residues 313 to 324 (AEEDAMRRKDEA) the composition is skewed to basic and acidic residues. Disordered regions lie at residues 313–333 (AEED…SSPF), 350–370 (YPTP…DTPS), 397–417 (YTTT…APLE), 537–581 (ATSP…PASL), 660–689 (RAVS…VDTH), 841–862 (QAKG…IPSN), and 1233–1285 (TPTT…AADP). A compositionally biased stretch (polar residues) spans 397–411 (YTTTDNQQHASTSPT). Positions 666–685 (SASDSESETSDMSEGSPEDP) are enriched in acidic residues. Over residues 1233 to 1259 (TPTTPAPSNSSAQANTNTPGSTPQTGV) the composition is skewed to polar residues.

The protein belongs to the Mediator complex subunit 13 family. Component of the SRB8-11 complex, which itself associates with the Mediator complex.

It is found in the nucleus. In terms of biological role, component of the SRB8-11 complex. The SRB8-11 complex is a regulatory module of the Mediator complex which is itself involved in regulation of basal and activated RNA polymerase II-dependent transcription. The SRB8-11 complex may be involved in the transcriptional repression of a subset of genes regulated by Mediator. It may inhibit the association of the Mediator complex with RNA polymerase II to form the holoenzyme complex. The polypeptide is Mediator of RNA polymerase II transcription subunit 13 (SSN2) (Phaeosphaeria nodorum (strain SN15 / ATCC MYA-4574 / FGSC 10173) (Glume blotch fungus)).